Consider the following 360-residue polypeptide: UDP-N-acetylglucosamine--N-acetylmuramyl-(pentapeptide) pyrophosphoryl-undecaprenol N-acetylglucosamine transferase (360 aa).

UDP-N-acetyl-alpha-D-glucosamine contacts are provided by Ser198 and Gln289.

This sequence belongs to the glycosyltransferase 28 family. MurG subfamily.

The protein localises to the cell membrane. The catalysed reaction is Mur2Ac(oyl-L-Ala-gamma-D-Glu-L-Lys-D-Ala-D-Ala)-di-trans,octa-cis-undecaprenyl diphosphate + UDP-N-acetyl-alpha-D-glucosamine = beta-D-GlcNAc-(1-&gt;4)-Mur2Ac(oyl-L-Ala-gamma-D-Glu-L-Lys-D-Ala-D-Ala)-di-trans,octa-cis-undecaprenyl diphosphate + UDP + H(+). The protein operates within cell wall biogenesis; peptidoglycan biosynthesis. Cell wall formation. Catalyzes the transfer of a GlcNAc subunit on undecaprenyl-pyrophosphoryl-MurNAc-pentapeptide (lipid intermediate I) to form undecaprenyl-pyrophosphoryl-MurNAc-(pentapeptide)GlcNAc (lipid intermediate II). This Streptococcus pyogenes serotype M12 (strain MGAS2096) protein is UDP-N-acetylglucosamine--N-acetylmuramyl-(pentapeptide) pyrophosphoryl-undecaprenol N-acetylglucosamine transferase.